Consider the following 453-residue polypeptide: Ribosomal protein uS12 methylthiotransferase RimO (453 aa).

The MTTase N-terminal domain maps to 4-120; sequence TSVHIVSLGC…IADHLRVLME (117 aa). The [4Fe-4S] cluster site is built by Cys-13, Cys-49, Cys-83, Cys-161, Cys-165, and Cys-168. A Radical SAM core domain is found at 147-377; the sequence is STPPYSAYLK…MEEQAVISHE (231 aa). The TRAM domain occupies 380-450; it reads QTLVGSLQEV…DYDLFAEVIS (71 aa).

This sequence belongs to the methylthiotransferase family. RimO subfamily. [4Fe-4S] cluster is required as a cofactor.

The protein localises to the cytoplasm. The catalysed reaction is L-aspartate(89)-[ribosomal protein uS12]-hydrogen + (sulfur carrier)-SH + AH2 + 2 S-adenosyl-L-methionine = 3-methylsulfanyl-L-aspartate(89)-[ribosomal protein uS12]-hydrogen + (sulfur carrier)-H + 5'-deoxyadenosine + L-methionine + A + S-adenosyl-L-homocysteine + 2 H(+). Catalyzes the methylthiolation of an aspartic acid residue of ribosomal protein uS12. In Syntrophus aciditrophicus (strain SB), this protein is Ribosomal protein uS12 methylthiotransferase RimO.